The chain runs to 540 residues: Putative cysteine ligase BshC (540 aa).

Residues 455–491 are a coiled coil; the sequence is GKENLKRLIRVVNSFEEKVKQRHRKNNQVAIQQLQKI.

It belongs to the BshC family.

In terms of biological role, involved in bacillithiol (BSH) biosynthesis. May catalyze the last step of the pathway, the addition of cysteine to glucosamine malate (GlcN-Mal) to generate BSH. In Desulforamulus reducens (strain ATCC BAA-1160 / DSM 100696 / MI-1) (Desulfotomaculum reducens), this protein is Putative cysteine ligase BshC.